The primary structure comprises 234 residues: tRNA (guanine-N(1)-)-methyltransferase (234 aa).

S-adenosyl-L-methionine is bound by residues Gly-115 and 135–140 (VGDYIL).

It belongs to the RNA methyltransferase TrmD family. Homodimer.

It is found in the cytoplasm. The catalysed reaction is guanosine(37) in tRNA + S-adenosyl-L-methionine = N(1)-methylguanosine(37) in tRNA + S-adenosyl-L-homocysteine + H(+). Specifically methylates guanosine-37 in various tRNAs. The sequence is that of tRNA (guanine-N(1)-)-methyltransferase from Rickettsia akari (strain Hartford).